We begin with the raw amino-acid sequence, 495 residues long: Ectonucleoside triphosphate diphosphohydrolase 2 (495 aa).

At 2–4 the chain is on the cytoplasmic side; it reads ARR. The chain crosses the membrane as a helical span at residues 5–25; it reads AAAVLLLLALGCLLGILLLCL. Residues 26-465 lie on the Extracellular side of the membrane; that stretch reads GSGDARGPPS…SHRSMLYNYW (440 aa). A glycan (N-linked (GlcNAc...) asparagine) is linked at Asn-62. A disulfide bridge connects residues Cys-73 and Cys-97. Glu-162 acts as the Proton acceptor in catalysis. 201–205 contacts ATP; that stretch reads GASTQ. 4 cysteine pairs are disulfide-bonded: Cys-239/Cys-286, Cys-267/Cys-311, Cys-324/Cys-329, and Cys-378/Cys-400. Asn-297 carries N-linked (GlcNAc...) asparagine glycosylation. 2 N-linked (GlcNAc...) asparagine glycosylation sites follow: Asn-418 and Asn-444. The chain crosses the membrane as a helical span at residues 466–486; it reads VILILLFVITTLTALLTAVYL. The Cytoplasmic segment spans residues 487-495; sequence LRRSKSSTI.

This sequence belongs to the GDA1/CD39 NTPase family. Requires Ca(2+) as cofactor. It depends on Mg(2+) as a cofactor.

It localises to the membrane. In the nervous system, could hydrolyze ATP and other nucleotides to regulate purinergic neurotransmission. Hydrolyzes ADP only to a marginal extent. In Gallus gallus (Chicken), this protein is Ectonucleoside triphosphate diphosphohydrolase 2 (ENTPD2).